Reading from the N-terminus, the 1551-residue chain is Pentafunctional AROM polypeptide 2 (1551 aa).

Residues 1-379 form a 3-dehydroquinate synthase region; that stretch reads MSIEKVSILG…YESKAHQIFK (379 aa). NAD(+) contacts are provided by residues 42 to 44, 80 to 83, 111 to 113, and Asp-116; these read DTN, ENHK, and GGV. Residue Arg-127 coordinates 7-phospho-2-dehydro-3-deoxy-D-arabino-heptonate. 136-137 is an NAD(+) binding site; the sequence is TT. 7-phospho-2-dehydro-3-deoxy-D-arabino-heptonate is bound by residues Asp-143 and Lys-149. Lys-158 contributes to the NAD(+) binding site. Position 159 (Asn-159) interacts with 7-phospho-2-dehydro-3-deoxy-D-arabino-heptonate. NAD(+) is bound by residues 176 to 179 and Asn-187; that span reads FLQT. A Zn(2+)-binding site is contributed by Glu-191. Residues 191 to 194 and Lys-243 contribute to the 7-phospho-2-dehydro-3-deoxy-D-arabino-heptonate site; that span reads EVVK. The Proton acceptor; for 3-dehydroquinate synthase activity role is filled by Glu-253. Residues 257–261 and His-264 each bind 7-phospho-2-dehydro-3-deoxy-D-arabino-heptonate; that span reads RNLLN. Zn(2+) is bound at residue His-264. The active-site Proton acceptor; for 3-dehydroquinate synthase activity is His-268. Residues His-280 and Lys-351 each coordinate 7-phospho-2-dehydro-3-deoxy-D-arabino-heptonate. His-280 contacts Zn(2+). Positions 392–835 are EPSP synthase; sequence VHPFANRHPE…WDVLHSKFNA (444 aa). The tract at residues 854–1044 is shikimate kinase; sequence DRSIVIIGMR…LPATRSTFVT (191 aa). 861–868 contacts ATP; it reads GMRAAGKT. Residues 1045-1258 form a 3-dehydroquinase region; it reads LTYPDLRKVP…IGVGQLSLKE (214 aa). Residue His-1162 is the Proton acceptor; for 3-dehydroquinate dehydratase activity of the active site. Lys-1191 acts as the Schiff-base intermediate with substrate; for 3-dehydroquinate dehydratase activity in catalysis. Residues 1271 to 1551 are shikimate dehydrogenase; that stretch reads EKEFWVVGFP…KVIHSAVLNE (281 aa).

In the N-terminal section; belongs to the sugar phosphate cyclases superfamily. Dehydroquinate synthase family. This sequence in the 2nd section; belongs to the EPSP synthase family. The protein in the 3rd section; belongs to the shikimate kinase family. It in the 4th section; belongs to the type-I 3-dehydroquinase family. In the C-terminal section; belongs to the shikimate dehydrogenase family. Homodimer. Zn(2+) serves as cofactor.

It is found in the cytoplasm. The catalysed reaction is 7-phospho-2-dehydro-3-deoxy-D-arabino-heptonate = 3-dehydroquinate + phosphate. It catalyses the reaction 3-dehydroquinate = 3-dehydroshikimate + H2O. The enzyme catalyses shikimate + NADP(+) = 3-dehydroshikimate + NADPH + H(+). It carries out the reaction shikimate + ATP = 3-phosphoshikimate + ADP + H(+). The catalysed reaction is 3-phosphoshikimate + phosphoenolpyruvate = 5-O-(1-carboxyvinyl)-3-phosphoshikimate + phosphate. The protein operates within metabolic intermediate biosynthesis; chorismate biosynthesis; chorismate from D-erythrose 4-phosphate and phosphoenolpyruvate: step 2/7. It functions in the pathway metabolic intermediate biosynthesis; chorismate biosynthesis; chorismate from D-erythrose 4-phosphate and phosphoenolpyruvate: step 3/7. Its pathway is metabolic intermediate biosynthesis; chorismate biosynthesis; chorismate from D-erythrose 4-phosphate and phosphoenolpyruvate: step 4/7. It participates in metabolic intermediate biosynthesis; chorismate biosynthesis; chorismate from D-erythrose 4-phosphate and phosphoenolpyruvate: step 5/7. The protein operates within metabolic intermediate biosynthesis; chorismate biosynthesis; chorismate from D-erythrose 4-phosphate and phosphoenolpyruvate: step 6/7. Its function is as follows. The AROM polypeptide catalyzes 5 consecutive enzymatic reactions in prechorismate polyaromatic amino acid biosynthesis. The protein is Pentafunctional AROM polypeptide 2 of Lodderomyces elongisporus (strain ATCC 11503 / CBS 2605 / JCM 1781 / NBRC 1676 / NRRL YB-4239) (Yeast).